Here is a 189-residue protein sequence, read N- to C-terminus: 6,7-dimethyl-8-ribityllumazine synthase (189 aa).

5-amino-6-(D-ribitylamino)uracil contacts are provided by residues Trp-31, 65 to 67, and 89 to 91; these read SFE and CVI. 94-95 is a (2S)-2-hydroxy-3-oxobutyl phosphate binding site; it reads ET. His-97 serves as the catalytic Proton donor. Residue Phe-122 coordinates 5-amino-6-(D-ribitylamino)uracil. Arg-136 serves as a coordination point for (2S)-2-hydroxy-3-oxobutyl phosphate.

It belongs to the DMRL synthase family.

The catalysed reaction is (2S)-2-hydroxy-3-oxobutyl phosphate + 5-amino-6-(D-ribitylamino)uracil = 6,7-dimethyl-8-(1-D-ribityl)lumazine + phosphate + 2 H2O + H(+). It functions in the pathway cofactor biosynthesis; riboflavin biosynthesis; riboflavin from 2-hydroxy-3-oxobutyl phosphate and 5-amino-6-(D-ribitylamino)uracil: step 1/2. In terms of biological role, catalyzes the formation of 6,7-dimethyl-8-ribityllumazine by condensation of 5-amino-6-(D-ribitylamino)uracil with 3,4-dihydroxy-2-butanone 4-phosphate. This is the penultimate step in the biosynthesis of riboflavin. In Flavobacterium psychrophilum (strain ATCC 49511 / DSM 21280 / CIP 103535 / JIP02/86), this protein is 6,7-dimethyl-8-ribityllumazine synthase.